The following is a 282-amino-acid chain: MTHWPSPAKLNLFLYITGQRADGYHTLQTLFQFLDYGDTLHIEPRRDGEIHLLTPVNGVENEDNLIVRAARLLMKAASESGRLPAGSGADISIEKRLPMGGGLGGGSSNAATVLVALNHLWQCGLSIDELATLGLTLGADVPVFVRGHAAFAEGVGEILTPVNPPEKWYLVAHPGVSIPTPVIFKDPQLPRNTPKRSIDTLLKCEFSNDCEVIARKRFREVDAALSWLLEYAPSRLTGTGACVFAEFDTESCARQVLEQAPEWLNAFVAKGVNLSPLHRELL.

The active site involves Lys-9. Residue 98–108 participates in ATP binding; sequence PMGGGLGGGSS. Residue Asp-140 is part of the active site.

It belongs to the GHMP kinase family. IspE subfamily. As to quaternary structure, homodimer.

The enzyme catalyses 4-CDP-2-C-methyl-D-erythritol + ATP = 4-CDP-2-C-methyl-D-erythritol 2-phosphate + ADP + H(+). The protein operates within isoprenoid biosynthesis; isopentenyl diphosphate biosynthesis via DXP pathway; isopentenyl diphosphate from 1-deoxy-D-xylulose 5-phosphate: step 3/6. Catalyzes the phosphorylation of the position 2 hydroxy group of 4-diphosphocytidyl-2C-methyl-D-erythritol. The chain is 4-diphosphocytidyl-2-C-methyl-D-erythritol kinase from Salmonella agona (strain SL483).